Reading from the N-terminus, the 441-residue chain is Glutamate-1-semialdehyde 2,1-aminomutase (441 aa).

N6-(pyridoxal phosphate)lysine is present on Lys273.

This sequence belongs to the class-III pyridoxal-phosphate-dependent aminotransferase family. HemL subfamily. Pyridoxal 5'-phosphate is required as a cofactor.

The protein localises to the cytoplasm. The enzyme catalyses (S)-4-amino-5-oxopentanoate = 5-aminolevulinate. The protein operates within porphyrin-containing compound metabolism; protoporphyrin-IX biosynthesis; 5-aminolevulinate from L-glutamyl-tRNA(Glu): step 2/2. The polypeptide is Glutamate-1-semialdehyde 2,1-aminomutase (Pyrobaculum calidifontis (strain DSM 21063 / JCM 11548 / VA1)).